Here is a 919-residue protein sequence, read N- to C-terminus: MPATRRTARVRRVAAVTVTALAAALLPPLAARADTPPAPPSDAKLAKTAARHDLTREQFYFSCRTLRQRGRRERPRRLTGTRLTTGYDPTDKGFYQGGDLKGLTEKLDYIKGLGTTSIWMAPIFKNQPVQGTGKDASAGYHGYWITDFTQVDPHFGTNKDLKNLISKAHAKGMKVFFDVITNHTADVVDYEEKSYDYLSKGAFPYLTKDGQPFDDADYADGERRFPRVDSGSFPRTPTVPTAKKNLKVPSWLNDPAMYHNRGDSTWAGESATYGDFNGLDDLWTERPEVVGGMEKIYQRWVEDFAIDGFRIDTVKHVDMEFWTQWATALDAYAAKKGRDDFFMFGEVYSADTSVTAPYVTQGRLDSTLDFPFQDAARAYASQGGSARKLAAVFGDDYKYTTDKANAYEQVTFLGNHDMGRIGTFLKQDAPEAGDAELLKKDRLANELMFLSRGNPVIYYGDEQGFTGAGGDKDARQPMFASRTADYLDDDQLGTDRTHAEAAYDTSAPLYRQISALAELRKANPALADGVQTERYAADGAGIYAFSRTDAKTGTEYVVAFNNAGTEPSAAFATGSAGMTFRGLYGTDATVKSGADSKVTVTVPARSAVVLKAAGRLAAPAAEPTISLHAPDPGATGTVELSADVAGGQLNRVVFAAQTGDGKWRTLGTADHAPYKVTHTVDADTPAGTALRYKAVVVDSAGRTASGRLHHRHPARRGGAHRRLPGPRGRPLQARRRELRRLGPVRLGRPRRREAHHLARHPPLHRPGRLRAFAYVKLKPGASTVGFLVIDKDGNKDVAADRTIDVTETGEVWIEQGEEQLVTERPEYPAQDTTKAVLHYKRADGNYDGWGLHVWGDAANPTDWAKPLQPVRTDPYGAVFEVPLTDGASSLSYMVHKGDEKDLPTDQAWTSRPTATRCGC.

Residues 1–33 form the signal peptide; that stretch reads MPATRRTARVRRVAAVTVTALAAALLPPLAARA. 2 residues coordinate Ca(2+): Asn-182 and Asp-281. Asp-312 functions as the Nucleophile in the catalytic mechanism. Position 316 (His-316) interacts with Ca(2+). The active-site Proton donor is the Glu-346. Positions 704–729 are disordered; that stretch reads ASGRLHHRHPARRGGAHRRLPGPRGR. The segment covering 707–724 has biased composition (basic residues); sequence RLHHRHPARRGGAHRRLP.

This sequence belongs to the glycosyl hydrolase 13 family. As to quaternary structure, monomer. Requires Ca(2+) as cofactor.

It is found in the secreted. It carries out the reaction Endohydrolysis of (1-&gt;4)-alpha-D-glucosidic linkages in polysaccharides containing three or more (1-&gt;4)-alpha-linked D-glucose units.. The chain is Alpha-amylase (amy) from Streptomyces lividans.